The chain runs to 291 residues: 3-methyl-2-oxobutanoate hydroxymethyltransferase (291 aa).

A compositionally biased stretch (polar residues) spans 1-10 (MTQLSAAQTP). Positions 1–20 (MTQLSAAQTPQPKPADGNRA) are disordered. Mg(2+) is bound by residues D71 and D110. Residues 71 to 72 (DS), D110, and K140 contribute to the 3-methyl-2-oxobutanoate site. E142 serves as a coordination point for Mg(2+). E208 (proton acceptor) is an active-site residue.

Belongs to the PanB family. In terms of assembly, homodecamer; pentamer of dimers. Requires Mg(2+) as cofactor.

It localises to the cytoplasm. It carries out the reaction 3-methyl-2-oxobutanoate + (6R)-5,10-methylene-5,6,7,8-tetrahydrofolate + H2O = 2-dehydropantoate + (6S)-5,6,7,8-tetrahydrofolate. Its pathway is cofactor biosynthesis; (R)-pantothenate biosynthesis; (R)-pantoate from 3-methyl-2-oxobutanoate: step 1/2. In terms of biological role, catalyzes the reversible reaction in which hydroxymethyl group from 5,10-methylenetetrahydrofolate is transferred onto alpha-ketoisovalerate to form ketopantoate. In Streptomyces coelicolor (strain ATCC BAA-471 / A3(2) / M145), this protein is 3-methyl-2-oxobutanoate hydroxymethyltransferase.